Consider the following 218-residue polypeptide: Insulin-induced gene 2 protein (218 aa).

Residues 1 to 21 (MGDRENVSYGSRPILAQKMNL) are Cytoplasmic-facing. Residues 22-44 (LLRGFLLFLIGVFLALVLNLLQV) form a helical membrane-spanning segment. Residues 45–63 (QRNVTLFPPDVLSSLFSSA) are Lumenal-facing. A helical membrane pass occupies residues 64–81 (WWVPLCCGTAAAAIGLLY). Over 82–96 (PCIDRHLGEPHKFKR) the chain is Cytoplasmic. The helical transmembrane segment at 97–119 (EWSSVMRCVAVFVGINHASAKVD) threads the bilayer. Residues 120-122 (FAN) lie on the Lumenal side of the membrane. Residues 123-141 (NMQLSLTLAALSIGLWWTF) traverse the membrane as a helical segment. Residues 142–146 (DRSRS) are Cytoplasmic-facing. Residues 147 to 168 (GLGLGIGISFFATLVSQLLVYN) traverse the membrane as a helical segment. Over 169-182 (GVYEYTAPDFLYVR) the chain is Lumenal. Residues 183–200 (SWLPCIFFAGGITMGNIG) form a helical membrane-spanning segment. Over 201–218 (RQLEMYERKALVEKSHRD) the chain is Cytoplasmic. The KxHxx signature appears at 212–218 (VEKSHRD).

The protein belongs to the INSIG family. Interacts with scap; interaction is direct and only takes place in the presence of sterols; it prevents interaction between scap and the coat protein complex II (COPII). Associates with the SCAP-SREBP complex; association is mediated via its interaction with scap and only takes place in the presence of sterols.

It localises to the endoplasmic reticulum membrane. Its function is as follows. Oxysterol-binding protein that mediates feedback control of cholesterol synthesis by controlling both endoplasmic reticulum to Golgi transport of scap and degradation of hmgcr. Acts as a negative regulator of cholesterol biosynthesis by mediating the retention of the SCAP-SREBP complex in the endoplasmic reticulum, thereby blocking the processing of sterol regulatory element-binding proteins (SREBPs). Binds oxysterol, including 22-hydroxycholesterol, 24-hydroxycholesterol, 25-hydroxycholesterol and 27-hydroxycholesterol, regulating interaction with scap and retention of the SCAP-SREBP complex in the endoplasmic reticulum. In presence of oxysterol, interacts with scap, retaining the SCAP-SREBP complex in the endoplasmic reticulum, thereby preventing scap from escorting SREBPs to the Golgi. Sterol deprivation reduce oxysterol-binding, disrupting the interaction between insig2 and scap, thereby promoting Golgi transport of the SCAP-SREBP complex, followed by processing and nuclear translocation of SREBPs. Also regulates cholesterol synthesis by regulating degradation of hmgcr. This Xenopus laevis (African clawed frog) protein is Insulin-induced gene 2 protein.